A 344-amino-acid polypeptide reads, in one-letter code: Treponemal membrane protein A (344 aa).

A signal peptide spans 1–21 (MKLKSLVFSLSALFLVLGFTG). Residue cysteine 22 is the site of N-palmitoyl cysteine attachment. The S-diacylglycerol cysteine moiety is linked to residue cysteine 22. Residues 257–344 (AAKTKQELSA…TEEPIEGGVQ (88 aa)) form a disordered region. Residues 260 to 277 (TKQELSAKLANEADKESP) show a composition bias toward basic and acidic residues. Composition is skewed to acidic residues over residues 312-322 (VPVEEMNENSS) and 335-344 (TEEPIEGGVQ).

The protein to T.pallidum TmpA.

Its subcellular location is the cell membrane. In Treponema phagedenis, this protein is Treponemal membrane protein A (tmpA).